A 1508-amino-acid polypeptide reads, in one-letter code: uncharacterized protein (1508 aa).

Residues 149 to 267 (ARRQQWRLRR…ARSLQEHRAT (119 aa)) are a coiled coil. Disordered regions lie at residues 248-268 (ERSE…RATE), 345-403 (SQDW…LAGS), 536-575 (FLKK…GKNL), 725-754 (GLEE…SQEH), and 868-916 (EAKS…AEPW). Basic and acidic residues predominate over residues 868 to 881 (EAKSKESGEGDKPG). The stretch at 972–1034 (ISRLERDNHR…KGNLGQLQKA (63 aa)) forms a coiled coil. 2 disordered regions span residues 1158–1186 (LAAG…LVWR) and 1204–1246 (KEAH…EEDP). Polar residues predominate over residues 1163–1172 (TGPSTGTGNS). Basic and acidic residues predominate over residues 1204-1215 (KEAHLEKEEKRP). A compositionally biased stretch (polar residues) spans 1220–1230 (AQGQALSSLSN). Residues 1271–1302 (HQASLDEATRLQEELQAKLEELQKKQHEAKLA) are a coiled coil.

This is an uncharacterized protein from Homo sapiens (Human).